The primary structure comprises 314 residues: DDRGK domain-containing protein 1 (314 aa).

Residues 1–28 (MVAPVWYLVAAALLVGFILFLTRSRGRA) form a helical membrane-spanning segment. The segment at 1–114 (MVAPVWYLVA…VEKPAETHLS (114 aa)) is mediates interaction with CDK5RAP3. Residues 29–314 (ASAGQEPLHN…GRESPAQAPA (286 aa)) are Cytoplasmic-facing. Disordered stretches follow at residues 31–75 (AGQE…SRLQ) and 100–186 (QEEE…QREH). 2 positions are modified to phosphoserine: Ser-72 and Ser-114. The mediates interaction with TRIP4 stretch occupies residues 118–216 (GAKKLRKLEE…MTEEQSQSFL (99 aa)). Residues 124-186 (KLEEKQARKA…AREEQAQREH (63 aa)) are compositionally biased toward basic and acidic residues. The short motif at 195-209 (AFVVEEEGVGETMTE) is the UFM1-interacting motif (UFIM) element. Residues 216 to 314 (LTEFINYIKQ…GRESPAQAPA (99 aa)) are mediates interaction with UFL1. The PCI domain maps to 229 to 273 (VLLEDLASQVGLRTQDTINRIQDLLAEGTITGVIDDRGKFIYITP). Lys-267 is covalently cross-linked (Glycyl lysine isopeptide (Lys-Gly) (interchain with G-Cter in UFM1)).

This sequence belongs to the DDRGK1 family. As to quaternary structure, component of the UFM1 ribosome E3 ligase (UREL) complex, composed of UFL1, DDRGK1 and CDK5RAP3. Interacts with (unphosphorylated) ERN1/IRE1-alpha; interaction is dependent on UFM1 and takes place in response to endoplasmic reticulum stress, regulating ERN1/IRE1-alpha stability. Interacts with NFKBIA. Interacts with SOX9. In terms of processing, ubiquitinated. Ubiquitination probably triggers proteasomal degradation and is negatively regulated by UFL1, the enzyme involved in the ufmylation of DDRGK1. Ufmylated; conjugated to ubiquitin-like protein UFM1, probably at Lys-267 by UFL1. The relevance of ufmylation is however unclear: as DDRGK1 acts as a substrate adapters for ufmylation, it is uncertain whether ufmylation is a collateral effect of ufmylation process or is required to regulate its activity. As to expression, widely expressed (at protein level). In the brain, highest levels in medulla oblongata, followed by cerebral cortex, cerebellum and frontal lobe.

The protein resides in the endoplasmic reticulum membrane. Functionally, component of the UFM1 ribosome E3 ligase (UREL) complex, a multiprotein complex that catalyzes ufmylation of endoplasmic reticulum-docked proteins. The UREL complex plays a key role in ribosome recycling by mediating mono-ufmylation of the RPL26/uL24 subunit of the 60S ribosome following ribosome dissociation: ufmylation weakens the junction between post-termination 60S subunits and SEC61 translocons, promoting release and recycling of the large ribosomal subunit from the endoplasmic reticulum membrane. Ufmylation of RPL26/uL24 and subsequent 60S ribosome recycling either take place after normal termination of translation or after ribosome stalling during cotranslational translocation at the endoplasmic reticulum. Within the UREL complex, DDRGK1 tethers the complex to the endoplasmic reticulum membrane to restrict its activity to endoplasmic reticulum-docked ribosomes and acts as an ufmylation 'reader': following RPL26/uL24 ufmylation, DDRGK1 specifically binds to ufmylated RPL26/uL24 via its UFIM motif, resulting in stable association between the 60S ribosome and the UREL complex, followed by dissociation of the 60S ribosome subunit from the endoplasmic reticulum membrane. The UREL complex is also involved in reticulophagy in response to endoplasmic reticulum stress by promoting ufmylation of proteins such as CYB5R3 and RPN1, thereby promoting lysosomal degradation of ufmylated proteins. Ufmylation-dependent reticulophagy inhibits the unfolded protein response (UPR) by regulating ERN1/IRE1-alpha stability. Acts as a regulator of immunity by promoting differentiation of B-cells into plasma cells: acts by promoting expansion of the endoplasmic reticulum and regulating the unfolded protein response (UPR). May also be required for TRIP4 ufmylation. May play a role in NF-kappa-B-mediated transcription through regulation of the phosphorylation and the degradation of NFKBIA, the inhibitor of NF-kappa-B. Plays a role in cartilage development through SOX9, inhibiting the ubiquitin-mediated proteasomal degradation of this transcriptional regulator. Required for stabilization and ufmylation of ATG9A. In Homo sapiens (Human), this protein is DDRGK domain-containing protein 1.